The chain runs to 87 residues: Small ribosomal subunit protein uS17 (87 aa).

It belongs to the universal ribosomal protein uS17 family. Part of the 30S ribosomal subunit.

In terms of biological role, one of the primary rRNA binding proteins, it binds specifically to the 5'-end of 16S ribosomal RNA. The protein is Small ribosomal subunit protein uS17 of Geobacillus kaustophilus (strain HTA426).